The following is a 252-amino-acid chain: Two-component response regulator ORR2 (252 aa).

Residues 7–157 (RVLVVDDSPV…DVQRLRKCSG (151 aa)) enclose the Response regulatory domain. Position 90 is a 4-aspartylphosphate (aspartate 90).

This sequence belongs to the ARR family. Type-A subfamily. Two-component system major event consists of a His-to-Asp phosphorelay between a sensor histidine kinase (HK) and a response regulator (RR). In plants, the His-to-Asp phosphorelay involves an additional intermediate named Histidine-containing phosphotransfer protein (HPt). This multistep phosphorelay consists of a His-Asp-His-Asp sequential transfer of a phosphate group between first a His and an Asp of the HK protein, followed by the transfer to a conserved His of the HPt protein and finally the transfer to an Asp in the receiver domain of the RR protein. In terms of tissue distribution, expressed in mature leaves and flowers, and at low levels in roots and shoots.

Its function is as follows. Functions as a response regulator involved in His-to-Asp phosphorelay signal transduction system. Phosphorylation of the Asp residue in the receiver domain activates the ability of the protein to promote the transcription of target genes. Type-A response regulators seem to act as negative regulators of the cytokinin signaling. This Oryza sativa subsp. indica (Rice) protein is Two-component response regulator ORR2.